The following is a 1143-amino-acid chain: Probable ATP-dependent RNA helicase DHX34 (1143 aa).

Disordered regions lie at residues 1 to 24 (MPPP…EEEA) and 75 to 94 (TSRK…PALA). The span at 76-85 (SRKEEKDPGQ) shows a compositional bias: basic and acidic residues. Positions 172-332 (LQTLKEHQVV…FSNAPVVQVP (161 aa)) constitute a Helicase ATP-binding domain. An ATP-binding site is contributed by 185–192 (GDTGCGKS). A DEAH box motif is present at residues 279 to 282 (DEVH). A Helicase C-terminal domain is found at 368–536 (SIDHKYPPEE…SLVLQMKSMS (169 aa)). Positions 701 to 955 (QAAQVGDSYS…LRARWESALD (255 aa)) are negatively regulates interaction with UPF1. Residues 724–766 (LKRQHEEGAGRRRKVLRLQEEQDGGSSDEDRAGPAPPGASDGV) form a disordered region. A phosphoserine mark is found at Ser-749 and Ser-750. Residues 810–1143 (PQLAVPDAFN…EVLRHRKQHV (334 aa)) form a required for phosphorylation of UPF1. Not required for interaction with UPF1 region. Residues 957–1143 (QLAHQAQQQL…EVLRHRKQHV (187 aa)) are required for the interaction with SMG1 and subsequent phosphorylation of UPF1.

This sequence belongs to the DEAD box helicase family. DEAH subfamily. Forms a complex with RUVBL1 and RUVBL2. Part of a complex composed of SMG1, DHX34 and UPF1; within the complex DHX34 acts as a scaffolding protein to facilitate SMG1 phosphorylation of UPF1. Interacts with UPF1, MOV10, EIF4A3, XRN2, SMG6, SMG7, SMG9, UPF3A, UPF3B, CASC3/MLN51, XRN1, DIS3 and DCP1A; the interactions are RNA-independent. Interacts with NCBP1/CPB80; the interaction is RNA-dependent. Interacts (via C-terminus) with SMG1; the interaction is RNA-independent. Expressed in whole blood, testis and spleen. Also expressed in the brain.

It carries out the reaction ATP + H2O = ADP + phosphate + H(+). Functionally, probable ATP-binding RNA helicase required for nonsense-mediated decay (NMD) degradation of mRNA transcripts containing premature stop codons. Promotes the phosphorylation of UPF1 along with its interaction with key NMD pathway proteins UPF2 and EIF4A3. Interaction with the RUVBL1-RUVBL2 complex results in loss of nucleotide binding ability and ATP hydrolysis of the complex. Negatively regulates the nucleotide binding ability and ATP hydrolysis of the RUVBL1-RUVBL2 complex via induction of N-terminus conformation changes of the RUVBL2 subunits. The chain is Probable ATP-dependent RNA helicase DHX34 from Homo sapiens (Human).